The following is a 722-amino-acid chain: PAB1-binding protein 1 (722 aa).

Residues 1-10 (MKGNFRKRDS) are compositionally biased toward basic and acidic residues. Positions 1-38 (MKGNFRKRDSSTNSRKGGNSDSNYTNGGVPNQNNSSMF) are disordered. Residues 11-38 (STNSRKGGNSDSNYTNGGVPNQNNSSMF) show a composition bias toward polar residues. The Sm domain occupies 51 to 107 (RQDYLLANSIGSDVTVTVTSGVKYTGLLVSCNLESTNGIDVVLRFPRVADSGVSDSV). Ser-106 bears the Phosphoserine mark. Residue Thr-193 is modified to Phosphothreonine. Ser-215 is modified (phosphoserine). Disordered regions lie at residues 305 to 380 (ALKS…LSSK), 412 to 488 (SSTL…NPHT), and 683 to 722 (GSGPSGMPANGSAMHSHGHSRNYHQTSHHGHHNSSTSGHK). Composition is skewed to low complexity over residues 307 to 316 (KSNSKPNSNK), 338 to 347 (SSSNSNKNEN), 356 to 370 (PAAAGAPEGKPPQKT), and 412 to 421 (SSTLKSNSSL). A Glycyl lysine isopeptide (Lys-Gly) (interchain with G-Cter in ubiquitin) cross-link involves residue Lys-344. The span at 429–455 (TPSAKTVSPTTQISAGKSESRRSGSNI) shows a compositional bias: polar residues. Ser-436 bears the Phosphoserine mark. The segment covering 456–471 (SQGQSSTGHTTRSSTS) has biased composition (low complexity). Residues 698–722 (SHGHSRNYHQTSHHGHHNSSTSGHK) are compositionally biased toward basic residues.

The protein belongs to the ataxin-2 family. Interacts (via C-terminus) with MKT1 (via C-terminus). Interacts with FIR1, IGO1, LSM12, PBP4 and PAB1.

It is found in the cytoplasm. Its subcellular location is the nucleus. It localises to the mitochondrion. Its function is as follows. Involved in pre-mRNA polyadenylation. May act to repress the ability of PAB1 to negatively regulate polyadenylation. Negative regulator of poly(A) nuclease (PAN) activity. Promotes mating-type switching in mother cells by positively regulating HO mRNA translation. Localizes MKT1 to polysomes. In Saccharomyces cerevisiae (strain ATCC 204508 / S288c) (Baker's yeast), this protein is PAB1-binding protein 1 (PBP1).